Reading from the N-terminus, the 196-residue chain is Peptide methionine sulfoxide reductase MsrA 2 (196 aa).

Cysteine 36 is an active-site residue.

It belongs to the MsrA Met sulfoxide reductase family.

The catalysed reaction is L-methionyl-[protein] + [thioredoxin]-disulfide + H2O = L-methionyl-(S)-S-oxide-[protein] + [thioredoxin]-dithiol. The enzyme catalyses [thioredoxin]-disulfide + L-methionine + H2O = L-methionine (S)-S-oxide + [thioredoxin]-dithiol. Functionally, has an important function as a repair enzyme for proteins that have been inactivated by oxidation. Catalyzes the reversible oxidation-reduction of methionine sulfoxide in proteins to methionine. This is Peptide methionine sulfoxide reductase MsrA 2 (msrA2) from Caulobacter vibrioides (strain ATCC 19089 / CIP 103742 / CB 15) (Caulobacter crescentus).